Consider the following 64-residue polypeptide: Translation machinery-associated protein 7 homolog (64 aa).

The tract at residues 1 to 64 (MSGREGGKKK…GGGIKKSGKK (64 aa)) is disordered. The span at 27 to 38 (MAFKQKQKEQQK) shows a compositional bias: basic and acidic residues. Positions 27–50 (MAFKQKQKEQQKALEAAKANASKK) form a coiled coil. The span at 39 to 50 (ALEAAKANASKK) shows a compositional bias: low complexity. Residues 53–64 (LVGGGIKKSGKK) show a composition bias toward gly residues.

The chain is Translation machinery-associated protein 7 homolog from Drosophila melanogaster (Fruit fly).